A 155-amino-acid polypeptide reads, in one-letter code: uncharacterized protein (155 aa).

A signal peptide spans 1–23; it reads MTILSLSRFMLAGVLLASFNASA.

It to E.coli YfjT.

This is an uncharacterized protein from Escherichia coli (strain K12).